An 85-amino-acid chain; its full sequence is Small ribosomal subunit protein bS16 (85 aa).

It belongs to the bacterial ribosomal protein bS16 family.

This Nitrosomonas eutropha (strain DSM 101675 / C91 / Nm57) protein is Small ribosomal subunit protein bS16.